Reading from the N-terminus, the 1500-residue chain is Secreted chitinase LysM12 (1500 aa).

Positions 1 to 23 are cleaved as a signal peptide; that stretch reads MAPLWNGMAAGLLLSAAVVSGQA. N-linked (GlcNAc...) asparagine glycans are attached at residues Asn-53, Asn-225, Asn-251, and Asn-270. LysM domains follow at residues 303–348 and 367–415; these read RTQK…HVCC and ATTT…VICI. The Chitin-binding type-1 domain maps to 428–496; the sequence is DAECGPQVPG…TNGCISHCGM (69 aa). Cystine bridges form between Cys-431–Cys-459, Cys-453–Cys-465, Cys-458–Cys-472, and Cys-490–Cys-494. A GH18 domain is found at 507 to 879; sequence FRSVGYYESY…PGMILQMKSG (373 aa). Glu-625 functions as the Proton donor in the catalytic mechanism. Chitin is bound at residue Tyr-626. N-linked (GlcNAc...) asparagine glycans are attached at residues Asn-721 and Asn-800. Trp-852 serves as a coordination point for chitin. N-linked (GlcNAc...) asparagine glycosylation is found at Asn-892 and Asn-983. Residues 1164-1193 are disordered; sequence IPKDIPYPDKTKRKDKDDDDNKKTEATDSE. The segment covering 1169-1193 has biased composition (basic and acidic residues); the sequence is PYPDKTKRKDKDDDDNKKTEATDSE.

The protein belongs to the glycosyl hydrolase 18 family. Chitinase class V subfamily.

The protein localises to the secreted. The enzyme catalyses Random endo-hydrolysis of N-acetyl-beta-D-glucosaminide (1-&gt;4)-beta-linkages in chitin and chitodextrins.. Functionally, secreted chitinase involved in the degradation of chitin, a component of the cell walls of fungi and exoskeletal elements of some animals (including worms and arthropods). Involved in pathogenesis via manipulation of host defenses for successful infection. This Penicillium expansum (Blue mold rot fungus) protein is Secreted chitinase LysM12.